Consider the following 263-residue polypeptide: 3-methyl-2-oxobutanoate hydroxymethyltransferase (263 aa).

Residues Asp-44 and Asp-83 each coordinate Mg(2+). Residues 44 to 45, Asp-83, and Lys-112 contribute to the 3-methyl-2-oxobutanoate site; that span reads DS. Glu-114 contacts Mg(2+). Glu-181 functions as the Proton acceptor in the catalytic mechanism.

It belongs to the PanB family. In terms of assembly, homodecamer; pentamer of dimers. The cofactor is Mg(2+).

The protein resides in the cytoplasm. The enzyme catalyses 3-methyl-2-oxobutanoate + (6R)-5,10-methylene-5,6,7,8-tetrahydrofolate + H2O = 2-dehydropantoate + (6S)-5,6,7,8-tetrahydrofolate. Its pathway is cofactor biosynthesis; (R)-pantothenate biosynthesis; (R)-pantoate from 3-methyl-2-oxobutanoate: step 1/2. Its function is as follows. Catalyzes the reversible reaction in which hydroxymethyl group from 5,10-methylenetetrahydrofolate is transferred onto alpha-ketoisovalerate to form ketopantoate. This is 3-methyl-2-oxobutanoate hydroxymethyltransferase from Sulfurimonas denitrificans (strain ATCC 33889 / DSM 1251) (Thiomicrospira denitrificans (strain ATCC 33889 / DSM 1251)).